The chain runs to 503 residues: Maturase K (503 aa).

Belongs to the intron maturase 2 family. MatK subfamily.

The protein resides in the plastid. The protein localises to the chloroplast. In terms of biological role, usually encoded in the trnK tRNA gene intron. Probably assists in splicing its own and other chloroplast group II introns. The protein is Maturase K of Rosa acicularis (Prickly rose).